The sequence spans 312 residues: MAVPAQPSSPPPVCQFSDRLATALNAAQEATGTDSHHAHHHHTPSGASSAISHTHDNMPHDHGQFHDHGPGLWTPEEHGHTHEHLEHAGKFAERDMPDYTGRNWTERAFTVGIGGPVGSGKTALLLALCRGFREKYNIAAVTNDIFTREDQEFLIRNEALPAERIRAIETGGCPHAAIREDISANMGALEKLQAEFDTEMLFVESGGDNLAANYSRELADYIIYVIDVSGGDKIPRKGGPGITQSDLLIVNKIDLAPHVGASLDVMRRDAAAMRGTGPTLFTSVRNNDGVDAVMDIIVSAWRASQGNGKAKA.

Residues 28-86 (QEATGTDSHHAHHHHTPSGASSAISHTHDNMPHDHGQFHDHGPGLWTPEEHGHTHEHLE) are disordered. The histine rich nickel-binding domain stretch occupies residues 36 to 87 (HHAHHHHTPSGASSAISHTHDNMPHDHGQFHDHGPGLWTPEEHGHTHEHLEH). The span at 53 to 86 (HTHDNMPHDHGQFHDHGPGLWTPEEHGHTHEHLE) shows a compositional bias: basic and acidic residues. Residues 115-122 (GPVGSGKT) carry the GTP binding P-loop motif. Positions 147–154 (TREDQEFL) match the Switch domain 1 motif. Positions 171–172 (GG) match the switch domain 2 motif.

This sequence belongs to the SIMIBI class G3E GTPase family. UreG subfamily. In terms of assembly, URE4, URE6 and URE7 may form a complex that acts as a GTP-hydrolysis-dependent molecular chaperone, activating the urease apoprotein URE1.

In terms of biological role, urease accessory protein that binds 2 nickel atoms likely via its conserved histidine-rich domain and supplies nickel for the functional urease URE1. Has probably a dual function as a nickel chaperone and GTPase. Plays a role in host brain invasion. This chain is Urease accessory protein 7, found in Cryptococcus neoformans var. grubii serotype A (strain H99 / ATCC 208821 / CBS 10515 / FGSC 9487) (Filobasidiella neoformans var. grubii).